Here is a 436-residue protein sequence, read N- to C-terminus: Tol-Pal system protein TolB (436 aa).

The N-terminal stretch at 1–28 (MEMLRRNFFRLLMVLVAGCGLIASPANA) is a signal peptide.

It belongs to the TolB family. In terms of assembly, the Tol-Pal system is composed of five core proteins: the inner membrane proteins TolA, TolQ and TolR, the periplasmic protein TolB and the outer membrane protein Pal. They form a network linking the inner and outer membranes and the peptidoglycan layer.

Its subcellular location is the periplasm. Functionally, part of the Tol-Pal system, which plays a role in outer membrane invagination during cell division and is important for maintaining outer membrane integrity. The polypeptide is Tol-Pal system protein TolB (Rhizobium meliloti (strain 1021) (Ensifer meliloti)).